Consider the following 448-residue polypeptide: tRNA-2-methylthio-N(6)-dimethylallyladenosine synthase (448 aa).

Residues 3–118 form the MTTase N-terminal domain; sequence KKVFIKTFGC…LPELLNARAA (116 aa). 6 residues coordinate [4Fe-4S] cluster: Cys-12, Cys-49, Cys-81, Cys-155, Cys-159, and Cys-162. The 234-residue stretch at 141–374 folds into the Radical SAM core domain; it reads RVEGASAFVS…QAVINRNILE (234 aa). A TRAM domain is found at 377 to 440; the sequence is QERVGTVQRL…TYTLRGEVVM (64 aa).

Belongs to the methylthiotransferase family. MiaB subfamily. As to quaternary structure, monomer. Requires [4Fe-4S] cluster as cofactor.

It is found in the cytoplasm. It catalyses the reaction N(6)-dimethylallyladenosine(37) in tRNA + (sulfur carrier)-SH + AH2 + 2 S-adenosyl-L-methionine = 2-methylsulfanyl-N(6)-dimethylallyladenosine(37) in tRNA + (sulfur carrier)-H + 5'-deoxyadenosine + L-methionine + A + S-adenosyl-L-homocysteine + 2 H(+). Its function is as follows. Catalyzes the methylthiolation of N6-(dimethylallyl)adenosine (i(6)A), leading to the formation of 2-methylthio-N6-(dimethylallyl)adenosine (ms(2)i(6)A) at position 37 in tRNAs that read codons beginning with uridine. The protein is tRNA-2-methylthio-N(6)-dimethylallyladenosine synthase of Acidovorax sp. (strain JS42).